A 146-amino-acid chain; its full sequence is Snaclec agkicetin-C subunit beta (146 aa).

The N-terminal stretch at 1–23 is a signal peptide; that stretch reads MGRFIFVSFGLLVVFLSLSGTGA. 3 cysteine pairs are disulfide-bonded: Cys-25–Cys-36, Cys-53–Cys-142, and Cys-119–Cys-134. In terms of domain architecture, C-type lectin spans 32 to 143; it reads YEGNCYLVVK…CSRTQPFVCK (112 aa).

Belongs to the snaclec family. In terms of assembly, heterodimer of subunits alpha and beta; disulfide-linked. As to expression, expressed by the venom gland.

The protein localises to the secreted. Is a potent glycoprotein Ibalpha (GP1BA) antagonist. Concentration-dependently inhibits botrocetin-, ristocetin- and low dose thrombin-induced platelet aggregation. Inhibits platelet adhesion only through inhibiting the vWF interaction with GP1BA, but has minimal effect on other platelet receptors, such as alpha-IIb/beta-3 (ITGA2B/ITGB3) or alpha-2/beta-1 (ITGA2/ITGB1). Causes an instant severe thrombocytopenia in rats and is not lethal to mice. The chain is Snaclec agkicetin-C subunit beta from Deinagkistrodon acutus (Hundred-pace snake).